Here is a 320-residue protein sequence, read N- to C-terminus: Malate dehydrogenase (320 aa).

NAD(+) is bound by residues 10–15 (GSGMIG) and Asp-34. Substrate is bound by residues Arg-83 and Arg-89. Residues Asn-96 and 119 to 121 (ITN) each bind NAD(+). Residues Asn-121 and Arg-152 each contribute to the substrate site. His-176 (proton acceptor) is an active-site residue.

This sequence belongs to the LDH/MDH superfamily. MDH type 3 family.

It catalyses the reaction (S)-malate + NAD(+) = oxaloacetate + NADH + H(+). Catalyzes the reversible oxidation of malate to oxaloacetate. The protein is Malate dehydrogenase of Brucella melitensis biotype 2 (strain ATCC 23457).